The following is a 257-amino-acid chain: Snake venom serine protease KN10 (257 aa).

A signal peptide spans 1 to 18 (MVLIRVLANLLILQLSYA). Positions 19–24 (QKSSEL) are excised as a propeptide. Residues 25–248 (VVGGDECNIN…HLDWIKSIIA (224 aa)) enclose the Peptidase S1 domain. Intrachain disulfides connect C31-C162, C49-C65, C141-C209, C173-C188, and C199-C224. Catalysis depends on H64, which acts as the Charge relay system. N102 is a glycosylation site (N-linked (GlcNAc...) asparagine). The Charge relay system role is filled by D109. N120 and N121 each carry an N-linked (GlcNAc...) asparagine glycan. Residue S203 is the Charge relay system of the active site.

This sequence belongs to the peptidase S1 family. Snake venom subfamily. Monomer. In terms of tissue distribution, expressed by the venom gland.

The protein resides in the secreted. Snake venom serine protease that may act in the hemostasis system of the prey. The chain is Snake venom serine protease KN10 from Trimeresurus stejnegeri (Chinese green tree viper).